Reading from the N-terminus, the 257-residue chain is uncharacterized protein (257 aa).

The signal sequence occupies residues 1–22 (MIHSKRLRLWLYLVLLAVFIGA). Residue C23 is the site of N-palmitoyl cysteine attachment. C23 is lipidated: S-diacylglycerol cysteine.

The protein belongs to the staphylococcal tandem lipoprotein family.

The protein localises to the cell membrane. This is an uncharacterized protein from Staphylococcus aureus (strain NCTC 8325 / PS 47).